Here is a 159-residue protein sequence, read N- to C-terminus: Acetolactate synthase small subunit (159 aa).

The region spanning 5–79 (ILSILLENES…DVLKVTEIED (75 aa)) is the ACT domain.

The protein belongs to the acetolactate synthase small subunit family. In terms of assembly, dimer of large and small chains.

The enzyme catalyses 2 pyruvate + H(+) = (2S)-2-acetolactate + CO2. It functions in the pathway amino-acid biosynthesis; L-isoleucine biosynthesis; L-isoleucine from 2-oxobutanoate: step 1/4. It participates in amino-acid biosynthesis; L-valine biosynthesis; L-valine from pyruvate: step 1/4. In Buchnera aphidicola subsp. Baizongia pistaciae (strain Bp), this protein is Acetolactate synthase small subunit (ilvH).